A 359-amino-acid polypeptide reads, in one-letter code: Phosphoribosylformylglycinamidine cyclo-ligase (359 aa).

Belongs to the AIR synthase family.

Its subcellular location is the cytoplasm. The catalysed reaction is 2-formamido-N(1)-(5-O-phospho-beta-D-ribosyl)acetamidine + ATP = 5-amino-1-(5-phospho-beta-D-ribosyl)imidazole + ADP + phosphate + H(+). It participates in purine metabolism; IMP biosynthesis via de novo pathway; 5-amino-1-(5-phospho-D-ribosyl)imidazole from N(2)-formyl-N(1)-(5-phospho-D-ribosyl)glycinamide: step 2/2. The chain is Phosphoribosylformylglycinamidine cyclo-ligase from Brucella melitensis biotype 2 (strain ATCC 23457).